The sequence spans 237 residues: Aspartate/glutamate leucyltransferase (237 aa).

This sequence belongs to the R-transferase family. Bpt subfamily.

Its subcellular location is the cytoplasm. It carries out the reaction N-terminal L-glutamyl-[protein] + L-leucyl-tRNA(Leu) = N-terminal L-leucyl-L-glutamyl-[protein] + tRNA(Leu) + H(+). The enzyme catalyses N-terminal L-aspartyl-[protein] + L-leucyl-tRNA(Leu) = N-terminal L-leucyl-L-aspartyl-[protein] + tRNA(Leu) + H(+). Functionally, functions in the N-end rule pathway of protein degradation where it conjugates Leu from its aminoacyl-tRNA to the N-termini of proteins containing an N-terminal aspartate or glutamate. The protein is Aspartate/glutamate leucyltransferase of Marinobacter nauticus (strain ATCC 700491 / DSM 11845 / VT8) (Marinobacter aquaeolei).